Reading from the N-terminus, the 111-residue chain is Probable 4-amino-4-deoxy-L-arabinose-phosphoundecaprenol flippase subunit ArnE (111 aa).

Transmembrane regions (helical) follow at residues 38–58, 61–81, and 91–111; these read LWLGLALICMGAAMVLWLLVL, LPVGIAYPMLSLNFVWVTLAA, and PRHWLGVALIISGIIILGSAA. An EamA domain is found at 40–109; sequence LGLALICMGA…IISGIIILGS (70 aa).

This sequence belongs to the ArnE family. Heterodimer of ArnE and ArnF.

Its subcellular location is the cell inner membrane. Its pathway is bacterial outer membrane biogenesis; lipopolysaccharide biosynthesis. Translocates 4-amino-4-deoxy-L-arabinose-phosphoundecaprenol (alpha-L-Ara4N-phosphoundecaprenol) from the cytoplasmic to the periplasmic side of the inner membrane. In Salmonella agona (strain SL483), this protein is Probable 4-amino-4-deoxy-L-arabinose-phosphoundecaprenol flippase subunit ArnE.